A 355-amino-acid chain; its full sequence is Tryptophan--tRNA ligase (355 aa).

ATP contacts are provided by residues 13 to 15 (QPT) and 21 to 22 (GN). Positions 14–22 (PTGNLHLGN) match the 'HIGH' region motif. An L-tryptophan-binding site is contributed by Asp-137. Residues 149–151 (GED), Ile-208, and 217–221 (KMSKS) each bind ATP. Residues 217 to 221 (KMSKS) carry the 'KMSKS' region motif.

It belongs to the class-I aminoacyl-tRNA synthetase family. Homodimer.

Its subcellular location is the cytoplasm. The catalysed reaction is tRNA(Trp) + L-tryptophan + ATP = L-tryptophyl-tRNA(Trp) + AMP + diphosphate + H(+). Functionally, catalyzes the attachment of tryptophan to tRNA(Trp). The polypeptide is Tryptophan--tRNA ligase (Mesorhizobium japonicum (strain LMG 29417 / CECT 9101 / MAFF 303099) (Mesorhizobium loti (strain MAFF 303099))).